The chain runs to 428 residues: Gamma-glutamyl phosphate reductase (428 aa).

Belongs to the gamma-glutamyl phosphate reductase family.

It is found in the cytoplasm. The catalysed reaction is L-glutamate 5-semialdehyde + phosphate + NADP(+) = L-glutamyl 5-phosphate + NADPH + H(+). The protein operates within amino-acid biosynthesis; L-proline biosynthesis; L-glutamate 5-semialdehyde from L-glutamate: step 2/2. In terms of biological role, catalyzes the NADPH-dependent reduction of L-glutamate 5-phosphate into L-glutamate 5-semialdehyde and phosphate. The product spontaneously undergoes cyclization to form 1-pyrroline-5-carboxylate. In Chelativorans sp. (strain BNC1), this protein is Gamma-glutamyl phosphate reductase.